Consider the following 227-residue polypeptide: Cytochrome c oxidase subunit 2 (227 aa).

At 1 to 14 (MAYSFQLGLQDATS) the chain is on the mitochondrial intermembrane side. A helical membrane pass occupies residues 15–45 (PIMEELMNFHDHTLMIVFLISSLVLYIISLM). The Mitochondrial matrix segment spans residues 46–59 (LTTKLTHTSTMDAQ). A helical membrane pass occupies residues 60 to 87 (EVETIWTILPAVILIMIALPSLRILYMM). The Mitochondrial intermembrane portion of the chain corresponds to 88 to 227 (DEINNPVLTV…HFENWSASMI (140 aa)). Residues His-161, Cys-196, Glu-198, Cys-200, His-204, and Met-207 each coordinate Cu cation. Glu-198 contributes to the Mg(2+) binding site.

This sequence belongs to the cytochrome c oxidase subunit 2 family. As to quaternary structure, component of the cytochrome c oxidase (complex IV, CIV), a multisubunit enzyme composed of 14 subunits. The complex is composed of a catalytic core of 3 subunits MT-CO1, MT-CO2 and MT-CO3, encoded in the mitochondrial DNA, and 11 supernumerary subunits COX4I, COX5A, COX5B, COX6A, COX6B, COX6C, COX7A, COX7B, COX7C, COX8 and NDUFA4, which are encoded in the nuclear genome. The complex exists as a monomer or a dimer and forms supercomplexes (SCs) in the inner mitochondrial membrane with NADH-ubiquinone oxidoreductase (complex I, CI) and ubiquinol-cytochrome c oxidoreductase (cytochrome b-c1 complex, complex III, CIII), resulting in different assemblies (supercomplex SCI(1)III(2)IV(1) and megacomplex MCI(2)III(2)IV(2)). Found in a complex with TMEM177, COA6, COX18, COX20, SCO1 and SCO2. Interacts with TMEM177 in a COX20-dependent manner. Interacts with COX20. Interacts with COX16. Cu cation is required as a cofactor.

The protein resides in the mitochondrion inner membrane. It carries out the reaction 4 Fe(II)-[cytochrome c] + O2 + 8 H(+)(in) = 4 Fe(III)-[cytochrome c] + 2 H2O + 4 H(+)(out). Component of the cytochrome c oxidase, the last enzyme in the mitochondrial electron transport chain which drives oxidative phosphorylation. The respiratory chain contains 3 multisubunit complexes succinate dehydrogenase (complex II, CII), ubiquinol-cytochrome c oxidoreductase (cytochrome b-c1 complex, complex III, CIII) and cytochrome c oxidase (complex IV, CIV), that cooperate to transfer electrons derived from NADH and succinate to molecular oxygen, creating an electrochemical gradient over the inner membrane that drives transmembrane transport and the ATP synthase. Cytochrome c oxidase is the component of the respiratory chain that catalyzes the reduction of oxygen to water. Electrons originating from reduced cytochrome c in the intermembrane space (IMS) are transferred via the dinuclear copper A center (CU(A)) of subunit 2 and heme A of subunit 1 to the active site in subunit 1, a binuclear center (BNC) formed by heme A3 and copper B (CU(B)). The BNC reduces molecular oxygen to 2 water molecules using 4 electrons from cytochrome c in the IMS and 4 protons from the mitochondrial matrix. The polypeptide is Cytochrome c oxidase subunit 2 (MT-CO2) (Praomys jacksoni (African forest rat)).